The sequence spans 1190 residues: Phosphatidylinositol-3,5-bisphosphate 3-phosphatase MTMR4 (1190 aa).

Ser-8 is subject to Phosphoserine. A Myotubularin phosphatase domain is found at 153-570 (EHIRCRQEAE…RALHLWTAVY (418 aa)). A 1,2-diacyl-sn-glycero-3-phospho-(1D-myo-inositol-3,5-bisphosphate) contacts are provided by Asn-320, Asn-345, and Ile-346. Asn-320, Asn-345, and Ile-346 together coordinate a 1,2-diacyl-sn-glycero-3-phospho-(1D-myo-inositol-3-phosphate). Cys-407 acts as the Phosphocysteine intermediate in catalysis. A 1,2-diacyl-sn-glycero-3-phospho-(1D-myo-inositol-3,5-bisphosphate) contacts are provided by Ser-408, Asp-409, Gly-410, Trp-411, Asp-412, Arg-413, Lys-449, and Arg-453. Positions 408, 409, 410, 411, 412, and 413 each coordinate a 1,2-diacyl-sn-glycero-3-phospho-(1D-myo-inositol-3-phosphate). Position 453 (Arg-453) interacts with a 1,2-diacyl-sn-glycero-3-phospho-(1D-myo-inositol-3-phosphate). Phosphoserine is present on residues Ser-610 and Ser-629. Disordered regions lie at residues 616-694 (SACD…FKGH), 724-749 (ETEA…GKPP), and 773-848 (DFPE…PSSV). A compositionally biased stretch (polar residues) spans 618 to 637 (CDTSSPLTRTSSDPNLNNHS). The span at 782 to 847 (LTGTPQQPHL…SISHQEQPSS (66 aa)) shows a compositional bias: polar residues. Positions 999–1003 (VPPLY) match the PY-motif; substrate motif for NEDD4 motif. Residues 1020-1052 (LRQIEAGYRQEVEQLRRQVRELQMRLDIRHCCA) are a coiled coil. The FYVE-type zinc finger occupies 1109–1169 (DHMASHCFNC…VCNSCYEHIQ (61 aa)). Zn(2+) is bound by residues Cys-1115, Cys-1118, Cys-1131, Cys-1134, Cys-1139, Cys-1142, Cys-1161, and Cys-1164.

The protein belongs to the protein-tyrosine phosphatase family. Non-receptor class myotubularin subfamily. Homooligomeric. Forms MTMR3:MTMR4 heterooligomers; regulates the localization of both proteins. The MTMR3:MTMR4 heterooligomer can also recruit both CEP55 and PLK1; occurs during early mitosis, regulates the phosphorylation of CEP55 by PLK1 and its recruitment to the midbody where it can mediate cell abscission. Interacts with SMAD2 and SMAD3; negatively regulates TGF-beta signaling through SMAD2 and SMAD3 dephosphorylation and retention in endosomes. Interacts with SMAD1; negatively regulates BMP signaling through SMAD1 dephosphorylation and retention in endosomes. In terms of processing, ubiquitinated. Ubiquitination by NEDD4 probably leads to proteasomal degradation. Post-translationally, phosphorylated by CDK1 during mitosis.

The protein resides in the early endosome membrane. Its subcellular location is the recycling endosome membrane. It localises to the late endosome membrane. The protein localises to the cytoplasmic vesicle. It is found in the phagosome membrane. The enzyme catalyses a 1,2-diacyl-sn-glycero-3-phospho-(1D-myo-inositol-3-phosphate) + H2O = a 1,2-diacyl-sn-glycero-3-phospho-(1D-myo-inositol) + phosphate. It catalyses the reaction a 1,2-diacyl-sn-glycero-3-phospho-(1D-myo-inositol-3,5-bisphosphate) + H2O = a 1,2-diacyl-sn-glycero-3-phospho-(1D-myo-inositol-5-phosphate) + phosphate. The catalysed reaction is 1,2-dioctanoyl-sn-glycero-3-phospho-(1-D-myo-inositol-3-phosphate) + H2O = 1,2-dioctanoyl-sn-glycero-3-phospho-(1D-myo-inositol) + phosphate. It carries out the reaction 1,2-dioctanoyl-sn-glycero-3-phospho-(1D-myo-inositol-3,5-bisphosphate) + H2O = 1,2-dioctanoyl-sn-glycero-3-phospho-(1D-myo-inositol-5-phosphate) + phosphate. In terms of biological role, lipid phosphatase that specifically dephosphorylates the D-3 position of phosphatidylinositol 3-phosphate and phosphatidylinositol 3,5-bisphosphate, generating phosphatidylinositol and phosphatidylinositol 5-phosphate. Decreases the levels of phosphatidylinositol 3-phosphate, a phospholipid found in cell membranes where it acts as key regulator of both cell signaling and intracellular membrane traffic, in a subset of endosomal membranes to negatively regulate both endocytic recycling and trafficking and/or maturation of endosomes toward lysosomes. Through phosphatidylinositol 3-phosphate turnover in phagosome membranes regulates phagocytosis and phagosome maturation. By decreasing phosphatidylinositol 3-monophosphate (PI3P) levels in immune cells it can also regulate the innate immune response. Beside its lipid phosphatase activity, can also function as a molecular adapter to regulate midbody abscission during mitotic cytokinesis. Can also negatively regulate TGF-beta and BMP signaling through Smad proteins dephosphorylation and retention in endosomes. The sequence is that of Phosphatidylinositol-3,5-bisphosphate 3-phosphatase MTMR4 from Mus musculus (Mouse).